The chain runs to 564 residues: Rhotekin (564 aa).

Arg-14 carries the post-translational modification Omega-N-methylarginine. Positions 17–98 (ALEMEFKRGR…LQRRKEAQVL (82 aa)) constitute an REM-1 domain. Phosphoserine is present on residues Ser-30 and Ser-106. Arg-230 is subject to Asymmetric dimethylarginine. Ser-232 is subject to Phosphoserine. The 108-residue stretch at 309 to 416 (QPTASGALRV…WMEALWQLFF (108 aa)) folds into the PH domain. A disordered region spans residues 518-564 (TFSLDAAPADHSLGPSRSVAPLPPQRSPKSRGFYSKSQLGPWLQSPV). Ser-520, Ser-529, and Ser-544 each carry phosphoserine.

As to quaternary structure, interacts via its C-terminal region with the TAX1BP3 PDZ domain. This interaction facilitates Rho-mediated activation of the c-Fos serum response element (SRE). Interacts with SEPT9. Specifically binds to GTP-bound RHOA, RHOB and RHOC and inhibits their GTPase activity. As to expression, abundantly expressed in brain and kidney. Weakly expressed in lung, testis, skeletal muscle, heart and thymus.

In terms of biological role, mediates Rho signaling to activate NF-kappa-B and may confer increased resistance to apoptosis to cells in gastric tumorigenesis. May play a novel role in the organization of septin structures. This chain is Rhotekin, found in Mus musculus (Mouse).